The chain runs to 195 residues: L-rhamnose-binding lectin CSL2 (195 aa).

SUEL-type lectin domains follow at residues 1 to 97 (TRVV…YTCL) and 104 to 195 (TCEG…YTCG).

In terms of biological role, L-rhamnose binding lectin. Has hemagglutinating activity towards rabbit erythrocytes and human type B erythrocytes. Hemagglutinating activity is inhibited by smooth-type lipopolysaccharide (LPS) from S.flexneri 1A and E.coli K12, but not by rough-type LPS from S.flexneri, E.coli K12 and E.coli EH100. Agglutinates E.coli K12 and B.subtilis. The sequence is that of L-rhamnose-binding lectin CSL2 from Oncorhynchus keta (Chum salmon).